We begin with the raw amino-acid sequence, 124 residues long: Small ribosomal subunit protein bS6 (124 aa).

The disordered stretch occupies residues Glu96–Ala124. Residues Ala115–Ala124 are compositionally biased toward polar residues.

It belongs to the bacterial ribosomal protein bS6 family.

Functionally, binds together with bS18 to 16S ribosomal RNA. The polypeptide is Small ribosomal subunit protein bS6 (Cupriavidus pinatubonensis (strain JMP 134 / LMG 1197) (Cupriavidus necator (strain JMP 134))).